Here is a 378-residue protein sequence, read N- to C-terminus: Erythronate-4-phosphate dehydrogenase (378 aa).

Substrate-binding residues include Ser45 and Thr66. NAD(+) is bound by residues Asp146 and Thr175. Arg208 is a catalytic residue. Asp232 provides a ligand contact to NAD(+). The active site involves Glu237. The Proton donor role is filled by His254. Gly257 provides a ligand contact to NAD(+). Tyr258 is a binding site for substrate.

The protein belongs to the D-isomer specific 2-hydroxyacid dehydrogenase family. PdxB subfamily. Homodimer.

It localises to the cytoplasm. The enzyme catalyses 4-phospho-D-erythronate + NAD(+) = (R)-3-hydroxy-2-oxo-4-phosphooxybutanoate + NADH + H(+). Its pathway is cofactor biosynthesis; pyridoxine 5'-phosphate biosynthesis; pyridoxine 5'-phosphate from D-erythrose 4-phosphate: step 2/5. Its function is as follows. Catalyzes the oxidation of erythronate-4-phosphate to 3-hydroxy-2-oxo-4-phosphonooxybutanoate. In Pectobacterium carotovorum subsp. carotovorum (strain PC1), this protein is Erythronate-4-phosphate dehydrogenase.